The sequence spans 790 residues: Polyribonucleotide nucleotidyltransferase (790 aa).

Mg(2+)-binding residues include aspartate 498 and aspartate 504. Residues 565-624 form the KH domain; the sequence is PRILRIKIKPEQIGEVIGPGGRVIRAIQEQTGTKISIEEDGTVFISAANEDAARRAVREI. An S1 motif domain is found at 634–702; it reads GEIFYGRVVT…PDGKINLSRK (69 aa). The disordered stretch occupies residues 710 to 790; that stretch reads AERAATAQAP…KELLGEDEPN (81 aa). A compositionally biased stretch (basic and acidic residues) spans 739-755; it reads PERRPGPPTPRRPEQRG. A compositionally biased stretch (pro residues) spans 757 to 772; the sequence is SRPPRPQAQRSTPPPG.

It belongs to the polyribonucleotide nucleotidyltransferase family. The cofactor is Mg(2+).

It is found in the cytoplasm. The catalysed reaction is RNA(n+1) + phosphate = RNA(n) + a ribonucleoside 5'-diphosphate. In terms of biological role, involved in mRNA degradation. Catalyzes the phosphorolysis of single-stranded polyribonucleotides processively in the 3'- to 5'-direction. This is Polyribonucleotide nucleotidyltransferase from Thermomicrobium roseum (strain ATCC 27502 / DSM 5159 / P-2).